A 448-amino-acid polypeptide reads, in one-letter code: Tubulin beta-2 chain (448 aa).

GTP is bound by residues Q11, E69, S138, G142, T143, G144, N204, and N226. E69 is a Mg(2+) binding site. Residues 421 to 448 (EYQQYQDATADEDGEYEDELDGQEEEDM) form a disordered region. Acidic residues predominate over residues 429-448 (TADEDGEYEDELDGQEEEDM).

This sequence belongs to the tubulin family. In terms of assembly, dimer of alpha and beta chains. A typical microtubule is a hollow water-filled tube with an outer diameter of 25 nm and an inner diameter of 15 nM. Alpha-beta heterodimers associate head-to-tail to form protofilaments running lengthwise along the microtubule wall with the beta-tubulin subunit facing the microtubule plus end conferring a structural polarity. Microtubules usually have 13 protofilaments but different protofilament numbers can be found in some organisms and specialized cells. It depends on Mg(2+) as a cofactor.

The protein resides in the cytoplasm. Its subcellular location is the cytoskeleton. Its function is as follows. Tubulin is the major constituent of microtubules, a cylinder consisting of laterally associated linear protofilaments composed of alpha- and beta-tubulin heterodimers. Microtubules grow by the addition of GTP-tubulin dimers to the microtubule end, where a stabilizing cap forms. Below the cap, tubulin dimers are in GDP-bound state, owing to GTPase activity of alpha-tubulin. The protein is Tubulin beta-2 chain (TUBB2) of Eleusine indica (Goosegrass).